Here is a 365-residue protein sequence, read N- to C-terminus: Validamycin A dioxygenase (365 aa).

The Fe2OG dioxygenase domain maps to 174–284; that stretch reads HATWTQSVNW…LVSLVYFFDA (111 aa). The Fe cation site is built by His203, Asp205, and His261. Positions 331-365 are disordered; sequence GELSLSRPGSADSPGSSPADDHPSRPGRHPAQGPQ. The segment covering 336–348 has biased composition (low complexity); it reads SRPGSADSPGSSP.

It belongs to the iron/ascorbate-dependent oxidoreductase family. The cofactor is Fe(2+).

It catalyses the reaction validamycin A + 2-oxoglutarate + O2 = validamycin B + succinate + CO2 + H(+). The enzyme catalyses validoxylamine A + 2-oxoglutarate + O2 = validoxylamine B + succinate + CO2 + H(+). It functions in the pathway antibiotic biosynthesis. In terms of biological role, involved in the biosynthesis of validamycin B, a component of the antifungal and antibiotic validamycin complex used as a crop protectant. Catalyzes the regioselective hydroxylation of validamycin A (4-O-beta-D-glucopyranosyl-validoxylamine A) at the C-6 position to yield validamycin B. To a lesser extent, also able to convert validoxylamine A to its hydroxylated derivative. This chain is Validamycin A dioxygenase, found in Streptomyces hygroscopicus subsp. limoneus.